The following is a 92-amino-acid chain: Defensin (92 aa).

Positions 1-20 (MKFFVLVAIAFALLACVAQA) are cleaved as a signal peptide. Residues 21-52 (QPVSDVDPIPEDHVLVHEDAHQEVLQHSRQKR) constitute a propeptide that is removed on maturation. Cystine bridges form between C55–C82, C68–C88, and C72–C90.

Belongs to the invertebrate defensin family. Type 1 subfamily. Hemolymph (at protein level).

It localises to the secreted. In terms of biological role, responsible for the anti Gram-positive activity of immune hemolymph. Expressed in the absence of immune challenge during metamorphosis. The sequence is that of Defensin (Def) from Drosophila melanogaster (Fruit fly).